The sequence spans 259 residues: 5'-nucleotidase SurE (259 aa).

A divalent metal cation-binding residues include Asp8, Asp9, Ser39, and Asn95.

Belongs to the SurE nucleotidase family. A divalent metal cation serves as cofactor.

It localises to the cytoplasm. The catalysed reaction is a ribonucleoside 5'-phosphate + H2O = a ribonucleoside + phosphate. Functionally, nucleotidase that shows phosphatase activity on nucleoside 5'-monophosphates. The polypeptide is 5'-nucleotidase SurE (Pseudothermotoga lettingae (strain ATCC BAA-301 / DSM 14385 / NBRC 107922 / TMO) (Thermotoga lettingae)).